A 169-amino-acid polypeptide reads, in one-letter code: MASFQDRAQHTIAQLDKELSKYPVLNNLERQTSVPKVYVILGLGGIYTFLVFFNIAGQLLVNLAGFILPTYYSLDALFSAGKADDTQWLTYWVVYAFFTVVESAISAPYWFPFYYIFKFALVLWLALPQTNGAQIVFKSLVQPLVGRYFTGGSTSANLRAQADAATKSQ.

The Cytoplasmic segment spans residues 1–35 (MASFQDRAQHTIAQLDKELSKYPVLNNLERQTSVP). The helical transmembrane segment at 36–55 (KVYVILGLGGIYTFLVFFNI) threads the bilayer. A topological domain (lumenal) is located at residue alanine 56. A helical membrane pass occupies residues 57–76 (GQLLVNLAGFILPTYYSLDA). At 77–88 (LFSAGKADDTQW) the chain is on the cytoplasmic side. A helical transmembrane segment spans residues 89–103 (LTYWVVYAFFTVVES). The Lumenal portion of the chain corresponds to 104-105 (AI). Residues 106–124 (SAPYWFPFYYIFKFALVLW) traverse the membrane as a helical segment. The Cytoplasmic portion of the chain corresponds to 125–169 (LALPQTNGAQIVFKSLVQPLVGRYFTGGSTSANLRAQADAATKSQ).

The protein belongs to the DP1 family. As to quaternary structure, oligomer.

Its subcellular location is the endoplasmic reticulum membrane. The protein resides in the golgi apparatus membrane. Its function is as follows. Required to generate and maintain the structure of the tubular endoplasmic reticulum network and the vacuole. Induces high curvature in membranes and causes membrane tubule formation. Involved in membrane/vesicle trafficking. The protein is Protein yop1 (yop1) of Emericella nidulans (strain FGSC A4 / ATCC 38163 / CBS 112.46 / NRRL 194 / M139) (Aspergillus nidulans).